We begin with the raw amino-acid sequence, 420 residues long: UDP-N-acetylglucosamine 1-carboxyvinyltransferase 2 (420 aa).

22–23 provides a ligand contact to phosphoenolpyruvate; it reads KN. Residue Arg92 participates in UDP-N-acetyl-alpha-D-glucosamine binding. Cys116 serves as the catalytic Proton donor. Residue Cys116 is modified to 2-(S-cysteinyl)pyruvic acid O-phosphothioketal. Residues 121 to 125, Asp307, and Ile329 contribute to the UDP-N-acetyl-alpha-D-glucosamine site; that span reads RPIDL.

Belongs to the EPSP synthase family. MurA subfamily.

It localises to the cytoplasm. It carries out the reaction phosphoenolpyruvate + UDP-N-acetyl-alpha-D-glucosamine = UDP-N-acetyl-3-O-(1-carboxyvinyl)-alpha-D-glucosamine + phosphate. It participates in cell wall biogenesis; peptidoglycan biosynthesis. Its function is as follows. Cell wall formation. Adds enolpyruvyl to UDP-N-acetylglucosamine. The chain is UDP-N-acetylglucosamine 1-carboxyvinyltransferase 2 from Streptococcus thermophilus (strain CNRZ 1066).